Reading from the N-terminus, the 499-residue chain is Maturase K (499 aa).

Belongs to the intron maturase 2 family. MatK subfamily.

The protein localises to the plastid. It localises to the chloroplast. In terms of biological role, usually encoded in the trnK tRNA gene intron. Probably assists in splicing its own and other chloroplast group II introns. This Ceratonia siliqua (Carob) protein is Maturase K.